A 181-amino-acid chain; its full sequence is Adenylate kinase 2 (181 aa).

10–15 (GSGKST) provides a ligand contact to ATP. Positions 30 to 59 (SMGGILREAIANATPLGIKAKPYVERGDLL) are NMP. Residues Arg36, 57 to 59 (DLL), 85 to 88 (GYPR), and Gln92 each bind AMP. Residues 126 to 132 (NRSLFDD) are LID. Arg127 lines the ATP pocket. Arg140 lines the AMP pocket. Pro168 lines the ATP pocket.

Belongs to the adenylate kinase family. In terms of assembly, monomer.

It is found in the cytoplasm. It catalyses the reaction AMP + ATP = 2 ADP. It participates in purine metabolism; AMP biosynthesis via salvage pathway; AMP from ADP: step 1/1. Functionally, catalyzes the reversible transfer of the terminal phosphate group between ATP and AMP. Plays an important role in cellular energy homeostasis and in adenine nucleotide metabolism. The chain is Adenylate kinase 2 from Synechocystis sp. (strain ATCC 27184 / PCC 6803 / Kazusa).